Reading from the N-terminus, the 83-residue chain is Gas vesicle protein G2 (83 aa).

This sequence belongs to the gas vesicle GvpG family. In terms of assembly, gvpF to GvpM interact with each other in vitro, and may form multi-subunit complex(es).

It localises to the gas vesicle. Its function is as follows. Proteins GvpF to GvpM might be involved in nucleating gas vesicle formation. A minor component of the gas vesicle. Gas vesicles are hollow, gas filled proteinaceous nanostructures found in several microbial planktonic microorganisms. They allow positioning of halobacteria at the optimal depth for growth in the poorly aerated, shallow brine pools of their habitat. In terms of biological role, expression of 2 c-vac DNA fragments containing 2 divergently transcribed regions (gvpE-gvpF-gvpG-gvpH-gvpI-gvpJ-gvpK-gvpL-gvpM and gvpA-gvpC-gvpN-gvpO) allows H.volcanii to produce gas vesicles. In Halobacterium salinarum (strain ATCC 700922 / JCM 11081 / NRC-1) (Halobacterium halobium), this protein is Gas vesicle protein G2.